The primary structure comprises 449 residues: Myb-related protein Pp1 (449 aa).

Residues 1–30 (LGNRWSAIAIPRRTDNEIKNYWNTHLKKRL) enclose the HTH myb-type domain. Residues 5 to 26 (WSAIAIPRRTDNEIKNYWNTHL) constitute a DNA-binding region (H-T-H motif).

It is found in the nucleus. Functionally, possible transcription activator. The chain is Myb-related protein Pp1 (PP1) from Physcomitrium patens (Spreading-leaved earth moss).